The primary structure comprises 614 residues: Phosphomethylpyrimidine synthase (614 aa).

Residues 1–16 are compositionally biased toward low complexity; the sequence is MNAQLSALQQQAQQLS. The disordered stretch occupies residues 1 to 36; it reads MNAQLSALQQQAQQLSESVTRPIPGSRKIHVPGSRP. Substrate-binding positions include Asn230, Met259, Tyr288, His324, 344-346, 385-388, and Glu424; these read SRG and DGLR. His428 serves as a coordination point for Zn(2+). Tyr451 contacts substrate. Position 492 (His492) interacts with Zn(2+). Cys572, Cys575, and Cys580 together coordinate [4Fe-4S] cluster.

The protein belongs to the ThiC family. In terms of assembly, homodimer. [4Fe-4S] cluster serves as cofactor.

It carries out the reaction 5-amino-1-(5-phospho-beta-D-ribosyl)imidazole + S-adenosyl-L-methionine = 4-amino-2-methyl-5-(phosphooxymethyl)pyrimidine + CO + 5'-deoxyadenosine + formate + L-methionine + 3 H(+). It participates in cofactor biosynthesis; thiamine diphosphate biosynthesis. In terms of biological role, catalyzes the synthesis of the hydroxymethylpyrimidine phosphate (HMP-P) moiety of thiamine from aminoimidazole ribotide (AIR) in a radical S-adenosyl-L-methionine (SAM)-dependent reaction. In Stenotrophomonas maltophilia (strain R551-3), this protein is Phosphomethylpyrimidine synthase.